The sequence spans 112 residues: cAMP-regulated phosphoprotein 19 (112 aa).

Residues 1–11 (MSAESPEPASA) show a composition bias toward low complexity. The tract at residues 1–48 (MSAESPEPASAEEQKEMEDKVISPEKAEEAKLKARYPHLGQKPGGSDF) is disordered. An N-acetylserine modification is found at Ser2. Over residues 12–32 (EEQKEMEDKVISPEKAEEAKL) the composition is skewed to basic and acidic residues. 2 positions are modified to phosphoserine; by GWL: Ser62 and Ser104. The disordered stretch occupies residues 73-112 (KNKQLPTAAPDKTEVTGDHIPTPQDLPQRKPSLVASKLAG). A Phosphoserine; by PKA modification is found at Ser104.

This sequence belongs to the endosulfine family. As to quaternary structure, interacts (when phosphorylated at Ser-62) with PPP2R2D. Phosphorylation at Ser-62 by MASTL/GWL during mitosis is essential for interaction with PPP2R2D (PR55-delta) and subsequent inactivation of PP2A.

The protein resides in the cytoplasm. Protein phosphatase inhibitor that specifically inhibits protein phosphatase 2A (PP2A) during mitosis. Inhibition of PP2A is enhanced when ARPP19 is phosphorylated. When phosphorylated at Ser-62 during mitosis, specifically interacts with PPP2R2D (PR55-delta) and inhibits its activity, leading to inactivation of PP2A, an essential condition to keep cyclin-B1-CDK1 activity high during M phase. This is cAMP-regulated phosphoprotein 19 (ARPP19) from Gallus gallus (Chicken).